The chain runs to 291 residues: UPF0276 protein VV3194 (291 aa).

The protein belongs to the UPF0276 family.

This chain is UPF0276 protein VV3194, found in Vibrio vulnificus (strain YJ016).